Here is a 393-residue protein sequence, read N- to C-terminus: Formate-dependent phosphoribosylglycinamide formyltransferase (393 aa).

Residues 22 to 23 and Glu-82 contribute to the N(1)-(5-phospho-beta-D-ribosyl)glycinamide site; that span reads EL. Residues Arg-114, Lys-155, 160–165, 195–198, and Glu-203 contribute to the ATP site; these read SSGKGQ and EGFV. Residues 119–308 enclose the ATP-grasp domain; the sequence is RLAAEELGLP…EFALHVRAIL (190 aa). The Mg(2+) site is built by Glu-267 and Glu-279. N(1)-(5-phospho-beta-D-ribosyl)glycinamide is bound by residues Asp-286, Lys-356, and 363–364; that span reads RR.

It belongs to the PurK/PurT family. Homodimer.

The enzyme catalyses N(1)-(5-phospho-beta-D-ribosyl)glycinamide + formate + ATP = N(2)-formyl-N(1)-(5-phospho-beta-D-ribosyl)glycinamide + ADP + phosphate + H(+). Its pathway is purine metabolism; IMP biosynthesis via de novo pathway; N(2)-formyl-N(1)-(5-phospho-D-ribosyl)glycinamide from N(1)-(5-phospho-D-ribosyl)glycinamide (formate route): step 1/1. Its function is as follows. Involved in the de novo purine biosynthesis. Catalyzes the transfer of formate to 5-phospho-ribosyl-glycinamide (GAR), producing 5-phospho-ribosyl-N-formylglycinamide (FGAR). Formate is provided by PurU via hydrolysis of 10-formyl-tetrahydrofolate. The chain is Formate-dependent phosphoribosylglycinamide formyltransferase from Nitratidesulfovibrio vulgaris (strain ATCC 29579 / DSM 644 / CCUG 34227 / NCIMB 8303 / VKM B-1760 / Hildenborough) (Desulfovibrio vulgaris).